The sequence spans 647 residues: Acetyl-coenzyme A synthetase (647 aa).

CoA contacts are provided by residues 190-193 (RGGK), threonine 310, and asparagine 334. ATP is bound by residues 386 to 388 (GEP), 410 to 415 (DTWWQT), aspartate 499, and arginine 514. Serine 522 serves as a coordination point for CoA. Arginine 525 lines the ATP pocket. Residues valine 536, histidine 538, and valine 541 each coordinate Mg(2+). A CoA-binding site is contributed by arginine 583. Lysine 608 carries the N6-acetyllysine modification.

The protein belongs to the ATP-dependent AMP-binding enzyme family. Requires Mg(2+) as cofactor. Acetylated. Deacetylation by the SIR2-homolog deacetylase activates the enzyme.

It catalyses the reaction acetate + ATP + CoA = acetyl-CoA + AMP + diphosphate. Its function is as follows. Catalyzes the conversion of acetate into acetyl-CoA (AcCoA), an essential intermediate at the junction of anabolic and catabolic pathways. AcsA undergoes a two-step reaction. In the first half reaction, AcsA combines acetate with ATP to form acetyl-adenylate (AcAMP) intermediate. In the second half reaction, it can then transfer the acetyl group from AcAMP to the sulfhydryl group of CoA, forming the product AcCoA. This is Acetyl-coenzyme A synthetase from Xanthomonas oryzae pv. oryzae (strain MAFF 311018).